A 365-amino-acid chain; its full sequence is 3-dehydroquinate synthase (365 aa).

Residues 106 to 110, 130 to 131, Lys142, Lys151, and 169 to 172 each bind NAD(+); these read GVIGD, TT, and FFAT. Zn(2+)-binding residues include Glu184, His247, and His264.

The protein belongs to the sugar phosphate cyclases superfamily. Dehydroquinate synthase family. The cofactor is Co(2+). Zn(2+) is required as a cofactor. Requires NAD(+) as cofactor.

Its subcellular location is the cytoplasm. It carries out the reaction 7-phospho-2-dehydro-3-deoxy-D-arabino-heptonate = 3-dehydroquinate + phosphate. It functions in the pathway metabolic intermediate biosynthesis; chorismate biosynthesis; chorismate from D-erythrose 4-phosphate and phosphoenolpyruvate: step 2/7. In terms of biological role, catalyzes the conversion of 3-deoxy-D-arabino-heptulosonate 7-phosphate (DAHP) to dehydroquinate (DHQ). The sequence is that of 3-dehydroquinate synthase from Listeria welshimeri serovar 6b (strain ATCC 35897 / DSM 20650 / CCUG 15529 / CIP 8149 / NCTC 11857 / SLCC 5334 / V8).